The primary structure comprises 380 residues: Transaldolase (380 aa).

Catalysis depends on Lys-141, which acts as the Schiff-base intermediate with substrate.

The protein belongs to the transaldolase family. Type 2 subfamily.

The protein resides in the cytoplasm. It carries out the reaction D-sedoheptulose 7-phosphate + D-glyceraldehyde 3-phosphate = D-erythrose 4-phosphate + beta-D-fructose 6-phosphate. It participates in carbohydrate degradation; pentose phosphate pathway; D-glyceraldehyde 3-phosphate and beta-D-fructose 6-phosphate from D-ribose 5-phosphate and D-xylulose 5-phosphate (non-oxidative stage): step 2/3. Transaldolase is important for the balance of metabolites in the pentose-phosphate pathway. The chain is Transaldolase from Trichodesmium erythraeum (strain IMS101).